Reading from the N-terminus, the 504-residue chain is Fumitremorgin C monooxygenase (504 aa).

The chain crosses the membrane as a helical span at residues 9 to 29 (LPYPGVVGASLLVILGIILLF). Position 442 (Cys-442) interacts with heme.

The protein belongs to the cytochrome P450 family. The cofactor is heme.

It localises to the membrane. The enzyme catalyses fumitremorgin C + 2 reduced [NADPH--hemoprotein reductase] + 2 O2 = 12alpha,13alpha-dihydroxyfumitremorgin C + 2 oxidized [NADPH--hemoprotein reductase] + 2 H2O + 2 H(+). It functions in the pathway mycotoxin biosynthesis. In terms of biological role, cytochrome P450 monooxygenase; part of the gene cluster that mediates the biosynthesis of fumitremorgins, indole alkaloids that carry not only intriguing chemical structures, but also interesting biological and pharmacological activities. The biosynthesis of fumitremorgin-type alkaloids begins by condensation of the two amino acids L-tryptophan and L-proline to brevianamide F, catalyzed by the non-ribosomal peptide synthetase ftmPS/ftmA. Brevianamide F is then prenylated by the prenyltransferase ftmPT1/ftmB in the presence of dimethylallyl diphosphate, resulting in the formation of tryprostatin B. The three cytochrome P450 monooxygenases, ftmP450-1/ftmC, ftmP450-2/ftmE and ftmP450-3/FtmG, are responsible for the conversion of tryprostatin B to 6-hydroxytryprostatin B, tryprostatin A to fumitremorgin C and fumitremorgin C to 12,13-dihydroxyfumitremorgin C, respectively. The putative methyltransferase ftmMT/ftmD is expected for the conversion of 6-hydroxytryprostatin B to tryprostatin A. FtmPT2/FtmH catalyzes the prenylation of 12,13-dihydroxyfumitre-morgin C in the presence of dimethylallyl diphosphate, resulting in the formation of fumitremorgin B. Fumitremorgin B is further converted to verruculogen by ftmOx1/ftmF via the insertion of an endoperoxide bond between the two prenyl moieties. Finally, verruculogen is further converted to fumitremorgin A by the verruculogen prenyltransferase ftmPT3. In Neosartorya fischeri (strain ATCC 1020 / DSM 3700 / CBS 544.65 / FGSC A1164 / JCM 1740 / NRRL 181 / WB 181) (Aspergillus fischerianus), this protein is Fumitremorgin C monooxygenase.